The following is a 161-amino-acid chain: Nucleotide-binding protein Shew_2893 (161 aa).

Belongs to the YajQ family.

In terms of biological role, nucleotide-binding protein. The sequence is that of Nucleotide-binding protein Shew_2893 from Shewanella loihica (strain ATCC BAA-1088 / PV-4).